Reading from the N-terminus, the 92-residue chain is Small ribosomal subunit protein uS19 (92 aa).

Belongs to the universal ribosomal protein uS19 family.

Functionally, protein S19 forms a complex with S13 that binds strongly to the 16S ribosomal RNA. The sequence is that of Small ribosomal subunit protein uS19 (rpsS) from Geobacillus stearothermophilus (Bacillus stearothermophilus).